Reading from the N-terminus, the 630-residue chain is Pentatricopeptide repeat-containing protein At1g62670, mitochondrial (630 aa).

The transit peptide at 1-22 (MRISFAIASTAKRFVHRSLVVR) directs the protein to the mitochondrion. PPR repeat units lie at residues 44-79 (TSYD…RPFP), 80-114 (SIIE…GIPH), 115-149 (NHYT…GYEP), 150-184 (NIVT…GYQP), 185-219 (NTVT…GCQP), 220-254 (DLVT…KLEP), 255-289 (GVLI…GIRP), 290-324 (NVVT…KINP), 325-359 (DVFT…SIDP), 360-394 (SIVT…HCFP), 395-429 (DVVT…GLVG), 430-464 (NTVT…GVPP), 465-499 (NIMT…KMEP), 500-534 (TIYT…GVKP), 535-569 (DVVA…GTLP), and 570-604 (NSGC…GFAG).

This sequence belongs to the PPR family. P subfamily.

The protein resides in the mitochondrion. The polypeptide is Pentatricopeptide repeat-containing protein At1g62670, mitochondrial (Arabidopsis thaliana (Mouse-ear cress)).